The following is a 187-amino-acid chain: Protein dj-1beta (187 aa).

Residue cysteine 45 is modified to Cysteine sulfinic acid (-SO2H). Catalysis depends on cysteine 104, which acts as the Nucleophile. Cysteine 104 bears the Cysteine sulfinic acid (-SO2H); alternate mark.

In terms of processing, oxidation of Cys-45 and Cys-104 in response to oxidative stress. Levels of oxidation increase with age. As to expression, expressed in the head and testis (at protein level). Ubiquitously expressed at constant levels.

It localises to the mitochondrion. It is found in the cytoplasm. The protein resides in the nucleus. Plays an important role in cell protection against oxidative stress and cell death by acting as a oxidative stress sensor. Does not play a role in methylglyoxal detoxification. Plays a role in mitochondrial function together with Pink1. In motor neurons regulates structural synaptic plasticity of locomotor behavior as part of the PTEN-phosphatidylinositol 3-kinase pathway in response to oxygen species (ROS) levels. This chain is Protein dj-1beta, found in Drosophila melanogaster (Fruit fly).